We begin with the raw amino-acid sequence, 438 residues long: Gamma-glutamyl phosphate reductase (438 aa).

This sequence belongs to the gamma-glutamyl phosphate reductase family.

The protein localises to the cytoplasm. It catalyses the reaction L-glutamate 5-semialdehyde + phosphate + NADP(+) = L-glutamyl 5-phosphate + NADPH + H(+). The protein operates within amino-acid biosynthesis; L-proline biosynthesis; L-glutamate 5-semialdehyde from L-glutamate: step 2/2. Catalyzes the NADPH-dependent reduction of L-glutamate 5-phosphate into L-glutamate 5-semialdehyde and phosphate. The product spontaneously undergoes cyclization to form 1-pyrroline-5-carboxylate. This is Gamma-glutamyl phosphate reductase from Prochlorococcus marinus (strain MIT 9313).